We begin with the raw amino-acid sequence, 380 residues long: Chaperone protein DnaJ (380 aa).

The region spanning 5–69 is the J domain; that stretch reads DYYEILGVSK…QKRAHYDQFG (65 aa). The CR-type zinc finger occupies 135 to 217; sequence GKETDIEIPS…CGGTGRVKRR (83 aa). Positions 148, 151, 165, 168, 191, 194, 205, and 208 each coordinate Zn(2+). CXXCXGXG motif repeat units lie at residues 148-155, 165-172, 191-198, and 205-212; these read CNTCHGTG, CPHCHGAG, CPYCGGTG, and CTTCGGTG.

It belongs to the DnaJ family. Homodimer. Zn(2+) is required as a cofactor.

The protein resides in the cytoplasm. Its function is as follows. Participates actively in the response to hyperosmotic and heat shock by preventing the aggregation of stress-denatured proteins and by disaggregating proteins, also in an autonomous, DnaK-independent fashion. Unfolded proteins bind initially to DnaJ; upon interaction with the DnaJ-bound protein, DnaK hydrolyzes its bound ATP, resulting in the formation of a stable complex. GrpE releases ADP from DnaK; ATP binding to DnaK triggers the release of the substrate protein, thus completing the reaction cycle. Several rounds of ATP-dependent interactions between DnaJ, DnaK and GrpE are required for fully efficient folding. Also involved, together with DnaK and GrpE, in the DNA replication of plasmids through activation of initiation proteins. The chain is Chaperone protein DnaJ from Geobacillus stearothermophilus (Bacillus stearothermophilus).